Consider the following 185-residue polypeptide: Homeobox expressed in ES cells 1 (185 aa).

The tract at residues 32–69 is disordered; that stretch reads KKDCTTSVRPHRPWTDTCGDSEKGGNPPLHAPDLPSET. The segment at residues 108-167 is a DNA-binding region (homeobox); the sequence is GRRPRTAFTQNQVEVLENVFRVNCYPGIDIREDLAQKLNLEEDRIQIWFQNRRAKMKRSR.

The protein belongs to the ANF homeobox family. Can form heterodimers with PROP1 in binding to DNA Interacts with TLE1. As to expression, high levels found in the embryonic liver, lower level expression seen in the viscera, amnion and yolk sac.

The protein resides in the nucleus. Functionally, required for the normal development of the forebrain, eyes and other anterior structures such as the olfactory placodes and pituitary gland. Possible transcriptional repressor. Binds to the palindromic PIII sequence, 5'-AGCTTGAGTCTAATTGAATTAACTGTAC-3'. HESX1 and PROP1 bind as heterodimers on this palindromic site, and, in vitro, HESX1 can antagonize PROP1 activation. This Mus musculus (Mouse) protein is Homeobox expressed in ES cells 1 (Hesx1).